The primary structure comprises 138 residues: Flavodoxin (138 aa).

Residues 1–136 (MKIVYWSGTG…DCIEFGKKIA (136 aa)) enclose the Flavodoxin-like domain.

It belongs to the flavodoxin family. The cofactor is FMN.

Functionally, low-potential electron donor to a number of redox enzymes. The sequence is that of Flavodoxin from Clostridium beijerinckii (Clostridium MP).